The primary structure comprises 348 residues: LIM domain-containing protein unc-97 (348 aa).

5 LIM zinc-binding domains span residues 21–73 (CVRC…CEHD), 82–132 (CGKC…CREC), 146–196 (CHKC…CLRC), 205–255 (CGAC…CEQH), and 264–315 (CFKC…CKRC).

In terms of assembly, interacts with unc-98. Component of an integrin containing attachment complex, composed of at least pat-2, pat-3, pat-4, pat-6, unc-52, unc-97 and unc-112. Restricted to tissue types that attach to the hypodermis, specifically body wall muscles, vulval muscles, and mechanosensory neurons.

It is found in the cell junction. The protein localises to the adherens junction. It localises to the nucleus. Its function is as follows. Component of an integrin containing attachment complex, which is required for muscle development and maintenance. Probably function in adherens junction. Affects the structural integrity of the integrin containing muscle adherens junctions and contributes to the mechanosensory functions of touch neurons. This chain is LIM domain-containing protein unc-97, found in Caenorhabditis elegans.